We begin with the raw amino-acid sequence, 283 residues long: Putative Ig-like domain-containing protein ORF10 (283 aa).

An N-terminal signal peptide occupies residues 1–55 (MIDKRNKKAVTHISTCLCHSSIPIYGDSPFLNTHRAAMDPRPLVLLLLLASHIST). N-linked (GlcNAc...) asparagine; by host glycosylation is found at asparagine 75, asparagine 92, asparagine 121, asparagine 157, asparagine 179, asparagine 198, asparagine 223, and asparagine 229. An Ig-like domain is found at 129-227 (QPLGQSIHHA…IDQQTNLTLT (99 aa)).

This chain is Putative Ig-like domain-containing protein ORF10, found in Galliformes (FAdV-1).